The chain runs to 589 residues: Transmembrane 9 superfamily member 1 (589 aa).

The signal sequence occupies residues 1–27; the sequence is MTVLGHPRSWSCHCLPVLILLLGIGHG. N-linked (GlcNAc...) asparagine glycosylation occurs at asparagine 178. 4 helical membrane passes run 237–257, 310–330, 339–359, and 373–393; these read LSII…AVIL, VLGV…MALL, GAIN…SGYV, and VWNI…TWSV. An N-linked (GlcNAc...) asparagine glycan is attached at asparagine 401. 3 consecutive transmembrane segments (helical) span residues 412–432, 482–502, and 518–538; these read ILLL…IGGI, GILF…SIAL, and SVLS…FYYA. A glycan (N-linked (GlcNAc...) asparagine) is linked at asparagine 542. A helical transmembrane segment spans residues 552-572; sequence FFGYSLLTGYVFFLMLGTISF.

The protein belongs to the nonaspanin (TM9SF) (TC 9.A.2) family.

The protein localises to the lysosome membrane. It localises to the cytoplasmic vesicle. The protein resides in the autophagosome membrane. Plays an essential role in autophagy. In Rattus norvegicus (Rat), this protein is Transmembrane 9 superfamily member 1 (Tm9sf1).